Here is a 275-residue protein sequence, read N- to C-terminus: Nitrogenase iron protein 1 (275 aa).

9 to 16 contacts ATP; that stretch reads GKGGIGKS. C97 serves as a coordination point for [4Fe-4S] cluster. ADP-ribosylarginine; by dinitrogenase reductase ADP-ribosyltransferase is present on R100. Position 132 (C132) interacts with [4Fe-4S] cluster.

It belongs to the NifH/BchL/ChlL family. As to quaternary structure, homodimer. Requires [4Fe-4S] cluster as cofactor. In terms of processing, the reversible ADP-ribosylation of Arg-100 inactivates the nitrogenase reductase and regulates nitrogenase activity.

It catalyses the reaction N2 + 8 reduced [2Fe-2S]-[ferredoxin] + 16 ATP + 16 H2O = H2 + 8 oxidized [2Fe-2S]-[ferredoxin] + 2 NH4(+) + 16 ADP + 16 phosphate + 6 H(+). Functionally, the key enzymatic reactions in nitrogen fixation are catalyzed by the nitrogenase complex, which has 2 components: the iron protein and the molybdenum-iron protein. The polypeptide is Nitrogenase iron protein 1 (nifH1) (Methanothermobacter marburgensis (strain ATCC BAA-927 / DSM 2133 / JCM 14651 / NBRC 100331 / OCM 82 / Marburg) (Methanobacterium thermoautotrophicum)).